The chain runs to 214 residues: Ras-like protein 2 (214 aa).

GTP-binding positions include 19–24, 35–41, 65–66, 122–125, and 152–154; these read GVGKSC, VDEYDPT, AG, NKCD, and SAK. The short motif at 38–46 is the Effector region element; sequence YDPTIEDSY. Positions 178 to 197 are disordered; it reads QGYSTGSGGSNAGGPSNKME. Cysteine 211 carries the post-translational modification Cysteine methyl ester. Residue cysteine 211 is the site of S-farnesyl cysteine attachment. A propeptide spans 212–214 (removed in mature form); it reads VLM.

This sequence belongs to the small GTPase superfamily. Ras family. In terms of assembly, interacts with farnesyltransferase beta subunit RAM1.

It is found in the cell membrane. Its activity is regulated as follows. Alternates between an inactive form bound to GDP and an active form bound to GTP. Activated by a guanine nucleotide-exchange factor (GEF) and inactivated by a GTPase-activating protein (GAP). Its function is as follows. Modulates the activity of the adenylate cyclase catalytic subunit and therefore affects the biosynthesis of cyclic-AMP. Plays a role in both surface attachment and surface recognition of appressoria, a highly specialized infection structure for plant penetration. Regulates appressorium formation by coordinated regulation of cAMP signaling and Pmk1 MAPK pathways. This is Ras-like protein 2 from Pyricularia oryzae (strain 70-15 / ATCC MYA-4617 / FGSC 8958) (Rice blast fungus).